We begin with the raw amino-acid sequence, 79 residues long: ATP synthase subunit c (79 aa).

2 consecutive transmembrane segments (helical) span residues 7–27 (VSGMAALGAGIAALACIGAGI) and 56–76 (IGSAFSEATAIYGLIIALFLI).

The protein belongs to the ATPase C chain family. F-type ATPases have 2 components, F(1) - the catalytic core - and F(0) - the membrane proton channel. F(1) has five subunits: alpha(3), beta(3), gamma(1), delta(1), epsilon(1). F(0) has three main subunits: a(1), b(2) and c(10-14). The alpha and beta chains form an alternating ring which encloses part of the gamma chain. F(1) is attached to F(0) by a central stalk formed by the gamma and epsilon chains, while a peripheral stalk is formed by the delta and b chains.

It localises to the cell membrane. Functionally, f(1)F(0) ATP synthase produces ATP from ADP in the presence of a proton or sodium gradient. F-type ATPases consist of two structural domains, F(1) containing the extramembraneous catalytic core and F(0) containing the membrane proton channel, linked together by a central stalk and a peripheral stalk. During catalysis, ATP synthesis in the catalytic domain of F(1) is coupled via a rotary mechanism of the central stalk subunits to proton translocation. In terms of biological role, key component of the F(0) channel; it plays a direct role in translocation across the membrane. A homomeric c-ring of between 10-14 subunits forms the central stalk rotor element with the F(1) delta and epsilon subunits. The sequence is that of ATP synthase subunit c from Clostridium botulinum (strain Hall / ATCC 3502 / NCTC 13319 / Type A).